The following is a 43-amino-acid chain: Parvalbumin beta (43 aa).

2 EF-hand domains span residues 1–20 and 22–43; these read KVFE…LKLF and LSSA…ALVK. Ca(2+) is bound by residues Asp-7, Asp-9, Ser-11, Phe-12, Glu-14, Glu-16, and Glu-37.

Detected in muscle and cutaneous mucus. In the skin, detected in cells in the basal region of the glandular epithelium of the dermal mucus glands (at protein level).

The protein resides in the cytoplasm. It localises to the secreted. Its function is as follows. In muscle, parvalbumin is thought to be involved in relaxation after contraction. It binds two calcium ions. The chain is Parvalbumin beta from Rana temporaria (European common frog).